We begin with the raw amino-acid sequence, 374 residues long: Chaperone protein DnaJ (374 aa).

The J domain occupies 4 to 69; it reads DFYETLCVSR…QKRAAYDRFG (66 aa). A CR-type zinc finger spans residues 131 to 210; it reads GKTAQIRVPT…CSGQGRLTEE (80 aa). Zn(2+)-binding residues include C144, C147, C161, C164, C184, C187, C198, and C201. 4 CXXCXGXG motif repeats span residues 144 to 151, 161 to 168, 184 to 191, and 198 to 205; these read CDECAGSG, CPMCHGAG, CPQCQGRG, and CRKCSGQG.

The protein belongs to the DnaJ family. In terms of assembly, homodimer. Requires Zn(2+) as cofactor.

The protein localises to the cytoplasm. In terms of biological role, participates actively in the response to hyperosmotic and heat shock by preventing the aggregation of stress-denatured proteins and by disaggregating proteins, also in an autonomous, DnaK-independent fashion. Unfolded proteins bind initially to DnaJ; upon interaction with the DnaJ-bound protein, DnaK hydrolyzes its bound ATP, resulting in the formation of a stable complex. GrpE releases ADP from DnaK; ATP binding to DnaK triggers the release of the substrate protein, thus completing the reaction cycle. Several rounds of ATP-dependent interactions between DnaJ, DnaK and GrpE are required for fully efficient folding. Also involved, together with DnaK and GrpE, in the DNA replication of plasmids through activation of initiation proteins. The chain is Chaperone protein DnaJ from Chelativorans sp. (strain BNC1).